We begin with the raw amino-acid sequence, 201 residues long: Ras-related protein Rab-1B (201 aa).

N-acetylmethionine is present on Met-1. 13 residues coordinate GTP: Ser-17, Gly-18, Val-19, Gly-20, Lys-21, Ser-22, Cys-23, Tyr-33, Thr-34, Glu-35, Ser-36, Ser-39, and Thr-40. A Mg(2+)-binding site is contributed by Ser-22. The Switch 1 signature appears at Asp-30–Phe-45. Residues Thr-40 and Asp-63 each contribute to the Mg(2+) site. The interval Thr-64–Gly-83 is switch 2 region; required for interaction with REP1/CHM. The Switch 2 signature appears at Ala-65–Gly-80. GTP is bound by residues Gly-66, Asn-121, Lys-122, Asp-124, Ser-151, Ala-152, and Lys-153. The tract at residues Gly-174 to Cys-201 is disordered. Residues Cys-200 and Cys-201 are each lipidated (S-geranylgeranyl cysteine). Cys-201 bears the Cysteine methyl ester mark.

Belongs to the small GTPase superfamily. Rab family. Interacts with MICAL1 and MICAL2. Interacts (in GTP-bound form) with MICALCL, MICAL1 and MILCAL3. Interacts with GDI1; the interaction requires the GDP-bound state. Interacts with CHM/REP1; the interaction requires the GDP-bound form and is necessary for prenylation by GGTase II. Interacts with RabGAP TBC1D20. Interacts (in GDP-bound form) with lipid phosphatase MTMR6 (via GRAM domain); the interaction regulates MTMR6 recruitment to the endoplasmic reticulum-Golgi intermediate compartment. Interacts (in GDP-bound form) with lipid phosphatase MTMR7. It depends on Mg(2+) as a cofactor. In terms of processing, prenylated; by GGTase II, only after interaction of the substrate with Rab escort protein 1 (REP1).

It is found in the cytoplasm. Its subcellular location is the membrane. The protein resides in the preautophagosomal structure membrane. It localises to the perinuclear region. It carries out the reaction GTP + H2O = GDP + phosphate + H(+). Its activity is regulated as follows. Regulated by guanine nucleotide exchange factors (GEFs) which promote the exchange of bound GDP for free GTP. Regulated by GTPase activating proteins (GAPs) including TBC1D20 which increases the GTP hydrolysis activity. Inhibited by GDP dissociation inhibitors (GDIs). Functionally, the small GTPases Rab are key regulators of intracellular membrane trafficking, from the formation of transport vesicles to their fusion with membranes. Rabs cycle between an inactive GDP-bound form and an active GTP-bound form that is able to recruit to membranes different set of downstream effectors directly responsible for vesicle formation, movement, tethering and fusion. Plays a role in the initial events of the autophagic vacuole development which take place at specialized regions of the endoplasmic reticulum. Regulates vesicular transport between the endoplasmic reticulum and successive Golgi compartments. Required to modulate the compacted morphology of the Golgi. Promotes the recruitment of lipid phosphatase MTMR6 to the endoplasmic reticulum-Golgi intermediate compartment. The polypeptide is Ras-related protein Rab-1B (RAB1B) (Macaca fascicularis (Crab-eating macaque)).